A 182-amino-acid chain; its full sequence is MDIISGFYNTINLAELSNAKTFGFNPNILEANVLNIAILLSGVIYLGRNFLTSALESRQQKVTEAIQEAEERLQQANVKLLDAEKQLTQAQTVIEQIKKEAEKTARTVKETILAQGKLDIERLTNNGKSSIEKAELQIKKQIQQHITDLAIKKVSAQMETFMTDNLQVKVIDTNIASLGGKI.

A helical membrane pass occupies residues 33 to 51; the sequence is VLNIAILLSGVIYLGRNFL.

This sequence belongs to the ATPase B chain family. As to quaternary structure, F-type ATPases have 2 components, F(1) - the catalytic core - and F(0) - the membrane proton channel. F(1) has five subunits: alpha(3), beta(3), gamma(1), delta(1), epsilon(1). F(0) has four main subunits: a(1), b(1), b'(1) and c(10-14). The alpha and beta chains form an alternating ring which encloses part of the gamma chain. F(1) is attached to F(0) by a central stalk formed by the gamma and epsilon chains, while a peripheral stalk is formed by the delta, b and b' chains.

The protein localises to the plastid. It localises to the chloroplast thylakoid membrane. Functionally, f(1)F(0) ATP synthase produces ATP from ADP in the presence of a proton or sodium gradient. F-type ATPases consist of two structural domains, F(1) containing the extramembraneous catalytic core and F(0) containing the membrane proton channel, linked together by a central stalk and a peripheral stalk. During catalysis, ATP synthesis in the catalytic domain of F(1) is coupled via a rotary mechanism of the central stalk subunits to proton translocation. Component of the F(0) channel, it forms part of the peripheral stalk, linking F(1) to F(0). The polypeptide is ATP synthase subunit b, chloroplastic (Guillardia theta (Cryptophyte)).